The primary structure comprises 552 residues: Serine protease 53 (552 aa).

The N-terminal stretch at 1–23 is a signal peptide; it reads MRQSWRPELLIVGAVVVIEGLQA. Peptidase S1 domains follow at residues 24 to 273 and 294 to 525; these read AQRA…AHVH and VACG…NLDW. The interval 27-46 is disordered; it reads ACGQRGPGPPEPQEGNTLPG. A disulfide bridge connects residues Cys-62 and Cys-78. Residues His-77 and Asp-128 each act as charge relay system in the active site. 4 disulfides stabilise this stretch: Cys-158–Cys-230, Cys-187–Cys-209, Cys-220–Cys-249, and Cys-326–Cys-342. Residues Ser-224, His-341, and Asp-382 each act as charge relay system in the active site. 2 disulfide bridges follow: Cys-443/Cys-463 and Cys-473/Cys-501. Catalysis depends on Ser-477, which acts as the Charge relay system.

The protein belongs to the peptidase S1 family.

It is found in the secreted. In terms of biological role, in vitro can degrade the fibrinogen alpha chain of as well as pro-urokinase-type plasminogen activator. The protein is Serine protease 53 (Prss53) of Mus musculus (Mouse).